We begin with the raw amino-acid sequence, 203 residues long: Urease accessory protein UreG (203 aa).

11–18 (GPVGSGKT) contacts GTP.

The protein belongs to the SIMIBI class G3E GTPase family. UreG subfamily. As to quaternary structure, homodimer. UreD, UreF and UreG form a complex that acts as a GTP-hydrolysis-dependent molecular chaperone, activating the urease apoprotein by helping to assemble the nickel containing metallocenter of UreC. The UreE protein probably delivers the nickel.

It is found in the cytoplasm. In terms of biological role, facilitates the functional incorporation of the urease nickel metallocenter. This process requires GTP hydrolysis, probably effectuated by UreG. This Prochlorococcus marinus (strain AS9601) protein is Urease accessory protein UreG.